Consider the following 450-residue polypeptide: Tubulin alpha chain (450 aa).

Residue glutamine 11 coordinates GTP. Position 40 is an N6-acetyllysine (lysine 40). 7 residues coordinate GTP: glutamate 71, serine 140, glycine 144, threonine 145, threonine 179, asparagine 206, and asparagine 228. Glutamate 71 contacts Mg(2+). Glutamate 254 is an active-site residue.

Belongs to the tubulin family. In terms of assembly, dimer of alpha and beta chains. A typical microtubule is a hollow water-filled tube with an outer diameter of 25 nm and an inner diameter of 15 nM. Alpha-beta heterodimers associate head-to-tail to form protofilaments running lengthwise along the microtubule wall with the beta-tubulin subunit facing the microtubule plus end conferring a structural polarity. Microtubules usually have 13 protofilaments but different protofilament numbers can be found in some organisms and specialized cells. The cofactor is Mg(2+). Undergoes a tyrosination/detyrosination cycle, the cyclic removal and re-addition of a C-terminal tyrosine residue by the enzymes tubulin tyrosine carboxypeptidase (TTCP) and tubulin tyrosine ligase (TTL), respectively. In terms of processing, acetylation of alpha chains at Lys-40 stabilizes microtubules and affects affinity and processivity of microtubule motors. This modification has a role in multiple cellular functions, ranging from cell motility, cell cycle progression or cell differentiation to intracellular trafficking and signaling.

It localises to the cytoplasm. The protein localises to the cytoskeleton. It carries out the reaction GTP + H2O = GDP + phosphate + H(+). Tubulin is the major constituent of microtubules, a cylinder consisting of laterally associated linear protofilaments composed of alpha- and beta-tubulin heterodimers. Microtubules grow by the addition of GTP-tubulin dimers to the microtubule end, where a stabilizing cap forms. Below the cap, tubulin dimers are in GDP-bound state, owing to GTPase activity of alpha-tubulin. In Lepidoglyphus destructor (Storage mite), this protein is Tubulin alpha chain.